The following is a 733-amino-acid chain: Catalase-peroxidase 2 (733 aa).

A disordered region spans residues 1 to 35 (MAEAETHPPIGESQTEPAESGCPMRIKPPVEGGSN). Positions 106-234 (WHAAGTYRVE…PXXPHMGLIY (129 aa)) form a cross-link, tryptophyl-tyrosyl-methioninium (Trp-Tyr) (with M-260). The active-site Proton acceptor is the H107. The segment at residues 234-260 (YVNPEGPEGNPDYLAAAIDIRETFGRM) is a cross-link (tryptophyl-tyrosyl-methioninium (Tyr-Met) (with W-106)). H275 contacts heme.

Belongs to the peroxidase family. Peroxidase/catalase subfamily. As to quaternary structure, homodimer or homotetramer. Heme b is required as a cofactor. Formation of the three residue Trp-Tyr-Met cross-link is important for the catalase, but not the peroxidase activity of the enzyme.

The catalysed reaction is H2O2 + AH2 = A + 2 H2O. The enzyme catalyses 2 H2O2 = O2 + 2 H2O. In terms of biological role, bifunctional enzyme with both catalase and broad-spectrum peroxidase activity. May play a role in the intracellular survival of mycobacteria. In Mycolicibacterium fortuitum (Mycobacterium fortuitum), this protein is Catalase-peroxidase 2.